Here is a 191-residue protein sequence, read N- to C-terminus: Dephospho-CoA kinase (191 aa).

The DPCK domain occupies Ala-3–Val-191. Ala-11–Phe-16 lines the ATP pocket.

This sequence belongs to the CoaE family.

The protein resides in the cytoplasm. It catalyses the reaction 3'-dephospho-CoA + ATP = ADP + CoA + H(+). It participates in cofactor biosynthesis; coenzyme A biosynthesis; CoA from (R)-pantothenate: step 5/5. Catalyzes the phosphorylation of the 3'-hydroxyl group of dephosphocoenzyme A to form coenzyme A. In Rickettsia typhi (strain ATCC VR-144 / Wilmington), this protein is Dephospho-CoA kinase.